The sequence spans 223 residues: Ribonuclease 3 (223 aa).

The RNase III domain maps to 5–127; that stretch reads LQRLEKKIGY…IIGAIYLDSD (123 aa). Mg(2+) is bound at residue glutamate 40. Aspartate 44 is an active-site residue. Mg(2+)-binding residues include aspartate 113 and glutamate 116. Glutamate 116 is an active-site residue. A DRBM domain is found at 154-223; that stretch reads DPKTRLQEYL…AADIALGQLN (70 aa).

Belongs to the ribonuclease III family. In terms of assembly, homodimer. Mg(2+) is required as a cofactor.

The protein resides in the cytoplasm. The enzyme catalyses Endonucleolytic cleavage to 5'-phosphomonoester.. Its function is as follows. Digests double-stranded RNA. Involved in the processing of primary rRNA transcript to yield the immediate precursors to the large and small rRNAs (23S and 16S). Processes some mRNAs, and tRNAs when they are encoded in the rRNA operon. Processes pre-crRNA and tracrRNA of type II CRISPR loci if present in the organism. The sequence is that of Ribonuclease 3 from Aliivibrio fischeri (strain ATCC 700601 / ES114) (Vibrio fischeri).